We begin with the raw amino-acid sequence, 112 residues long: DNA-binding protein PF1087 (112 aa).

Belongs to the PDCD5 family.

The polypeptide is DNA-binding protein PF1087 (Pyrococcus furiosus (strain ATCC 43587 / DSM 3638 / JCM 8422 / Vc1)).